The sequence spans 151 residues: Ribosome-binding factor A (151 aa).

The segment at 116–151 is disordered; the sequence is DAEVARAAANARPAGDPDPYREPRPADDDDEDDEDE. Residues 120 to 129 show a composition bias toward low complexity; sequence ARAAANARPA. Over residues 142-151 the composition is skewed to acidic residues; that stretch reads DDDDEDDEDE.

Belongs to the RbfA family. Monomer. Binds 30S ribosomal subunits, but not 50S ribosomal subunits or 70S ribosomes.

It is found in the cytoplasm. In terms of biological role, one of several proteins that assist in the late maturation steps of the functional core of the 30S ribosomal subunit. Associates with free 30S ribosomal subunits (but not with 30S subunits that are part of 70S ribosomes or polysomes). Required for efficient processing of 16S rRNA. May interact with the 5'-terminal helix region of 16S rRNA. The polypeptide is Ribosome-binding factor A (Thermobifida fusca (strain YX)).